The following is a 365-amino-acid chain: Guanine nucleotide-binding protein alpha-6 subunit (365 aa).

The N-myristoyl glycine moiety is linked to residue G2. One can recognise a G-alpha domain in the interval 42–364; that stretch reads NRFKILLLGT…NENLRSAGLH (323 aa). Positions 45-58 are G1 motif; that stretch reads KILLLGTAESGKST. GTP-binding positions include 50-57, 187-193, 212-216, 281-284, and A336; these read GTAESGKS, VHCRIST, DVGGQ, and NKYD. Mg(2+)-binding residues include S57 and T193. The tract at residues 185 to 193 is G2 motif; sequence DIVHCRIST. The G3 motif stretch occupies residues 208-217; it reads FKMVDVGGQR. The interval 277-284 is G4 motif; sequence VLFLNKYD. A G5 motif region spans residues 334–339; that stretch reads TTATDT.

The protein belongs to the G-alpha family. In terms of assembly, g proteins are composed of 3 units; alpha, beta and gamma. The alpha chain contains the guanine nucleotide binding site.

Its function is as follows. Guanine nucleotide-binding proteins (G proteins) are involved as modulators or transducers in various transmembrane signaling systems. This chain is Guanine nucleotide-binding protein alpha-6 subunit (gpa-6), found in Caenorhabditis briggsae.